Consider the following 33-residue polypeptide: Lysozyme C, spleen isozyme (33 aa).

It belongs to the glycosyl hydrolase 22 family. Monomer.

The enzyme catalyses Hydrolysis of (1-&gt;4)-beta-linkages between N-acetylmuramic acid and N-acetyl-D-glucosamine residues in a peptidoglycan and between N-acetyl-D-glucosamine residues in chitodextrins.. Lysozymes have primarily a bacteriolytic function; those in tissues and body fluids are associated with the monocyte-macrophage system and enhance the activity of immunoagents. In Equus caballus (Horse), this protein is Lysozyme C, spleen isozyme.